We begin with the raw amino-acid sequence, 265 residues long: Mlc titration factor A (265 aa).

Histidine 111, histidine 148, histidine 152, and glutamate 211 together coordinate Zn(2+).

This sequence belongs to the MtfA family. In terms of assembly, interacts with Mlc. Zn(2+) is required as a cofactor.

Its subcellular location is the cytoplasm. Its function is as follows. Involved in the modulation of the activity of the glucose-phosphotransferase system (glucose-PTS). Interacts with the transcriptional repressor Mlc, preventing its interaction with DNA and leading to the modulation of expression of genes regulated by Mlc, including ptsG, which encodes the PTS system glucose-specific EIICB component. Shows zinc-dependent metallopeptidase activity. The sequence is that of Mlc titration factor A from Escherichia coli O17:K52:H18 (strain UMN026 / ExPEC).